The following is an 86-amino-acid chain: uncharacterized protein (86 aa).

It localises to the mitochondrion. This is an uncharacterized protein from Marchantia polymorpha (Common liverwort).